A 97-amino-acid chain; its full sequence is Co-chaperonin GroES (97 aa).

This sequence belongs to the GroES chaperonin family. Heptamer of 7 subunits arranged in a ring. Interacts with the chaperonin GroEL.

The protein resides in the cytoplasm. Together with the chaperonin GroEL, plays an essential role in assisting protein folding. The GroEL-GroES system forms a nano-cage that allows encapsulation of the non-native substrate proteins and provides a physical environment optimized to promote and accelerate protein folding. GroES binds to the apical surface of the GroEL ring, thereby capping the opening of the GroEL channel. The protein is Co-chaperonin GroES of Stenotrophomonas maltophilia (Pseudomonas maltophilia).